Here is a 1549-residue protein sequence, read N- to C-terminus: Zinc finger MYM-type protein 4 (1549 aa).

A2 is subject to N-acetylalanine. The tract at residues 83-108 (VVSSDNEDEQDCSSKDNLVSSVHTDG) is disordered. Polar residues predominate over residues 97–106 (KDNLVSSVHT). Residue T106 is modified to Phosphothreonine. A phosphoserine mark is found at S109 and S121. Glycyl lysine isopeptide (Lys-Gly) (interchain with G-Cter in SUMO2) cross-links involve residues K139 and K148. Residue S161 is modified to Phosphoserine. K195 participates in a covalent cross-link: Glycyl lysine isopeptide (Lys-Gly) (interchain with G-Cter in SUMO2). S197 is modified (phosphoserine). Glycyl lysine isopeptide (Lys-Gly) (interchain with G-Cter in SUMO2) cross-links involve residues K201 and K232. S242 carries the post-translational modification Phosphoserine. K250 is covalently cross-linked (Glycyl lysine isopeptide (Lys-Gly) (interchain with G-Cter in SUMO1); alternate). K250 is covalently cross-linked (Glycyl lysine isopeptide (Lys-Gly) (interchain with G-Cter in SUMO2); alternate). Residues 267–291 (GLLDRVKDEPDNAQEYSHGQQQKTQ) are disordered. Glycyl lysine isopeptide (Lys-Gly) (interchain with G-Cter in SUMO2) cross-links involve residues K273, K289, K327, K400, K428, and K430. Over residues 280–290 (QEYSHGQQQKT) the composition is skewed to polar residues. MYM-type zinc fingers lie at residues 362–402 (QLFC…PKDV), 414–457 (KDFC…RHEV), 464–499 (HKLCSDACFSKFRSANNLTMNCCENCGGYCYSGSGQ), 510–544 (KKFCSSMCVTSYKQKSAKITPCALCKSLRSSAEMI), 554–592 (ELFCSVNCLSAYRVKMVTSAGVQVQCNSCKTSAIPQYHL), 600–631 (RNFCSYSCVVAFQNLFNKPTGMNSSVVPLSQG), 708–742 (FQFCGKNCCDEYKKINNVMAMCEYCKIEKIIKETV), 749–788 (KSFCSEGCKLLYKHDLGKRWGSHCKMCSYCLQTSPKLIQN), and 795–829 (EDFCCEECMSKYTVLFYQMAKCDGCKRQGKLSESL). Residues K1035 and K1062 each participate in a glycyl lysine isopeptide (Lys-Gly) (interchain with G-Cter in SUMO2) cross-link. Residues S1065 and S1072 each carry the phosphoserine modification. Residues K1081 and K1128 each participate in a glycyl lysine isopeptide (Lys-Gly) (interchain with G-Cter in SUMO2) cross-link. The segment at 1124-1185 (DSELKPFSKG…RRGRKKSVVP (62 aa)) is disordered. Residues 1125-1135 (SELKPFSKGET) are compositionally biased toward basic and acidic residues. Over residues 1161–1182 (SRTRRRHRDGFPQPRRRGRKKS) the composition is skewed to basic residues. Residues S1182 and S1257 each carry the phosphoserine modification. A Glycyl lysine isopeptide (Lys-Gly) (interchain with G-Cter in SUMO2) cross-link involves residue K1432. Phosphoserine is present on residues S1540, S1543, and S1548.

In terms of biological role, plays a role in the regulation of cell morphology and cytoskeletal organization. This Mus musculus (Mouse) protein is Zinc finger MYM-type protein 4 (Zmym4).